Consider the following 135-residue polypeptide: Transcription antitermination protein NusB (135 aa).

This sequence belongs to the NusB family.

Its function is as follows. Involved in transcription antitermination. Required for transcription of ribosomal RNA (rRNA) genes. Binds specifically to the boxA antiterminator sequence of the ribosomal RNA (rrn) operons. The chain is Transcription antitermination protein NusB from Shewanella pealeana (strain ATCC 700345 / ANG-SQ1).